The following is a 445-amino-acid chain: C-terminal-binding protein 2 (445 aa).

Arginine 22 is subject to Asymmetric dimethylarginine. NAD(+) contacts are provided by residues serine 106, 186–191 (IGFGRT), aspartate 210, 243–249 (CNLNEHN), 270–272 (AAR), and aspartate 296. The active site involves arginine 272. The active site involves glutamate 301. Residue histidine 321 is the Proton donor of the active site. Residue 321 to 324 (HTAW) coordinates NAD(+). The interval 414–445 (THNLPTVAHPSQAPSPNQPTKHGDNREHPNEQ) is disordered. Residue serine 428 is modified to Phosphoserine; by HIPK2. The segment covering 434–445 (KHGDNREHPNEQ) has biased composition (basic and acidic residues).

It belongs to the D-isomer specific 2-hydroxyacid dehydrogenase family. Interacts with HIPK2 and PNN. Interacts with the transcription factors ZNF217, BKLF, delta EF1/AREB6/ZEB, EVI-1 and Friend of GATA (FOG) via the consensus motif P-X-[DNS]-L-[STVA]. Also interacts with the C-terminus of adenovirus E1A protein. Can form a complex with BKLF on a CACCC-box oligonucleotide. Can form homodimers or heterodimers of CTBP1 and CTBP2. Interacts with NRIP1 and WIZ. Interacts with PRDM16; represses white adipose tissue (WAT)-specific genes expression. Interacts with MCRIP1. In terms of processing, phosphorylation by HIPK2 on Ser-428 induces proteasomal degradation. Found in all tissues except spleen and liver.

The protein localises to the nucleus. It localises to the synapse. In terms of biological role, corepressor targeting diverse transcription regulators. Isoform 2 probably acts as a scaffold for specialized synapses. Functions in brown adipose tissue (BAT) differentiation. This chain is C-terminal-binding protein 2 (Ctbp2), found in Mus musculus (Mouse).